Here is a 118-residue protein sequence, read N- to C-terminus: MAWALLLLTLLTQGTGSWAQSALTQPPSASGSPGQSVTISCTGTSSDVGGYNYVSWYQQHPGKAPKLMIYEVSKRPSGVPDRFSGSKSGNTASLTVSGLQAEDEADYYCSSYAGSNNF.

An N-terminal signal peptide occupies residues 1 to 19 (MAWALLLLTLLTQGTGSWA). A Pyrrolidone carboxylic acid modification is found at glutamine 20. Positions 20–44 (QSALTQPPSASGSPGQSVTISCTGT) are framework-1. The Ig-like domain occupies 20-118 (QSALTQPPSA…CSSYAGSNNF (99 aa)). An intrachain disulfide couples cysteine 41 to cysteine 109. The segment at 45 to 53 (SSDVGGYNY) is complementarity-determining-1. The segment at 54 to 70 (VSWYQQHPGKAPKLMIY) is framework-2. Residues 71 to 73 (EVS) form a complementarity-determining-2 region. The interval 74–109 (KRPSGVPDRFSGSKSGNTASLTVSGLQAEDEADYYC) is framework-3. Residues 76-97 (PSGVPDRFSGSKSGNTASLTVS) are disordered. The segment covering 85–97 (GSKSGNTASLTVS) has biased composition (polar residues). Residues 110-118 (SSYAGSNNF) are complementarity-determining-3.

As to quaternary structure, immunoglobulins are composed of two identical heavy chains and two identical light chains; disulfide-linked.

The protein localises to the secreted. It is found in the cell membrane. Its function is as follows. V region of the variable domain of immunoglobulin light chains that participates in the antigen recognition. Immunoglobulins, also known as antibodies, are membrane-bound or secreted glycoproteins produced by B lymphocytes. In the recognition phase of humoral immunity, the membrane-bound immunoglobulins serve as receptors which, upon binding of a specific antigen, trigger the clonal expansion and differentiation of B lymphocytes into immunoglobulins-secreting plasma cells. Secreted immunoglobulins mediate the effector phase of humoral immunity, which results in the elimination of bound antigens. The antigen binding site is formed by the variable domain of one heavy chain, together with that of its associated light chain. Thus, each immunoglobulin has two antigen binding sites with remarkable affinity for a particular antigen. The variable domains are assembled by a process called V-(D)-J rearrangement and can then be subjected to somatic hypermutations which, after exposure to antigen and selection, allow affinity maturation for a particular antigen. The polypeptide is Immunoglobulin lambda variable 2-8 (Homo sapiens (Human)).